A 187-amino-acid chain; its full sequence is Ribosome-recycling factor (187 aa).

Belongs to the RRF family.

Its subcellular location is the cytoplasm. Responsible for the release of ribosomes from messenger RNA at the termination of protein biosynthesis. May increase the efficiency of translation by recycling ribosomes from one round of translation to another. The polypeptide is Ribosome-recycling factor (Rhodopseudomonas palustris (strain BisA53)).